Consider the following 294-residue polypeptide: Cytidine deaminase (294 aa).

2 consecutive CMP/dCMP-type deaminase domains span residues 48–168 and 186–294; these read DEDA…FGPK and LTGD…VLLA. Position 89 to 91 (89 to 91) interacts with substrate; that stretch reads NME. His102 is a binding site for Zn(2+). Residue Glu104 is the Proton donor of the active site. Positions 129 and 132 each coordinate Zn(2+).

Belongs to the cytidine and deoxycytidylate deaminase family. As to quaternary structure, homodimer. Zn(2+) serves as cofactor.

It carries out the reaction cytidine + H2O + H(+) = uridine + NH4(+). The enzyme catalyses 2'-deoxycytidine + H2O + H(+) = 2'-deoxyuridine + NH4(+). Its function is as follows. This enzyme scavenges exogenous and endogenous cytidine and 2'-deoxycytidine for UMP synthesis. The sequence is that of Cytidine deaminase from Escherichia coli O139:H28 (strain E24377A / ETEC).